A 227-amino-acid chain; its full sequence is Inner membrane lipoprotein SadB (227 aa).

An N-terminal signal peptide occupies residues 1 to 21; it reads MHKNGKFIPLLALGFTFFLSG. The N-palmitoyl cysteine moiety is linked to residue Cys-22. Residue Cys-22 is the site of S-diacylglycerol cysteine attachment. Residues 31-68 are a coiled coil; the sequence is VEEMKEQQKEQETKINLLEKQQKEQEAKINLLEKQQAT.

As to quaternary structure, homotrimer.

It is found in the cell inner membrane. Its function is as follows. Required for proper surface expression of the autotransporter adhesin SadA. Could be directly involved in the biogenesis of functionally active SadA. The protein is Inner membrane lipoprotein SadB of Salmonella typhimurium (strain LT2 / SGSC1412 / ATCC 700720).